The primary structure comprises 317 residues: Aspartate carbamoyltransferase catalytic subunit (317 aa).

Carbamoyl phosphate is bound by residues Arg-64 and Thr-65. An L-aspartate-binding site is contributed by Lys-92. The carbamoyl phosphate site is built by Arg-114, His-142, and Gln-145. L-aspartate contacts are provided by Arg-176 and Arg-230. 2 residues coordinate carbamoyl phosphate: Gly-271 and Pro-272.

It belongs to the aspartate/ornithine carbamoyltransferase superfamily. ATCase family. In terms of assembly, heterododecamer (2C3:3R2) of six catalytic PyrB chains organized as two trimers (C3), and six regulatory PyrI chains organized as three dimers (R2).

It carries out the reaction carbamoyl phosphate + L-aspartate = N-carbamoyl-L-aspartate + phosphate + H(+). Its pathway is pyrimidine metabolism; UMP biosynthesis via de novo pathway; (S)-dihydroorotate from bicarbonate: step 2/3. Catalyzes the condensation of carbamoyl phosphate and aspartate to form carbamoyl aspartate and inorganic phosphate, the committed step in the de novo pyrimidine nucleotide biosynthesis pathway. This chain is Aspartate carbamoyltransferase catalytic subunit, found in Nitratidesulfovibrio vulgaris (strain ATCC 29579 / DSM 644 / CCUG 34227 / NCIMB 8303 / VKM B-1760 / Hildenborough) (Desulfovibrio vulgaris).